Here is a 654-residue protein sequence, read N- to C-terminus: tRNA 5-methylaminomethyl-2-thiouridine biosynthesis bifunctional protein MnmC (654 aa).

Residues 1-236 (MSTLLQHAQI…KWEVMHGVYT (236 aa)) are tRNA (mnm(5)s(2)U34)-methyltransferase. The tract at residues 262-654 (IGAGLAGSAT…FALRRLIRGK (393 aa)) is FAD-dependent cmnm(5)s(2)U34 oxidoreductase.

The protein in the N-terminal section; belongs to the methyltransferase superfamily. tRNA (mnm(5)s(2)U34)-methyltransferase family. In the C-terminal section; belongs to the DAO family. FAD is required as a cofactor.

It localises to the cytoplasm. The enzyme catalyses 5-aminomethyl-2-thiouridine(34) in tRNA + S-adenosyl-L-methionine = 5-methylaminomethyl-2-thiouridine(34) in tRNA + S-adenosyl-L-homocysteine + H(+). Functionally, catalyzes the last two steps in the biosynthesis of 5-methylaminomethyl-2-thiouridine (mnm(5)s(2)U) at the wobble position (U34) in tRNA. Catalyzes the FAD-dependent demodification of cmnm(5)s(2)U34 to nm(5)s(2)U34, followed by the transfer of a methyl group from S-adenosyl-L-methionine to nm(5)s(2)U34, to form mnm(5)s(2)U34. The polypeptide is tRNA 5-methylaminomethyl-2-thiouridine biosynthesis bifunctional protein MnmC (Pseudomonas entomophila (strain L48)).